The following is a 133-amino-acid chain: Probable nuclear transport factor 2 (133 aa).

Residues 10–128 enclose the NTF2 domain; the sequence is VAKAFIQHYY…YFIGNEIFRL (119 aa).

Its subcellular location is the cytoplasm. Its function is as follows. Facilitates protein transport into the nucleus. Could be part of a multicomponent system of cytosolic factors that assemble at the pore complex during nuclear import. The protein is Probable nuclear transport factor 2 (ran-4) of Caenorhabditis elegans.